Consider the following 478-residue polypeptide: Solute carrier family 2, facilitated glucose transporter member 8 (478 aa).

The tract at residues 1 to 20 is disordered; the sequence is MTPEDQEETQPLLRPPGGSA. The Cytoplasmic segment spans residues 1-25; the sequence is MTPEDQEETQPLLRPPGGSAPRGRR. Positions 11 to 20 are enriched in low complexity; sequence PLLRPPGGSA. The Dileucine internalization motif motif lies at 12 to 13; the sequence is LL. A helical membrane pass occupies residues 26–46; it reads VFLAAFAAALGPLSFGFALGY. The Extracellular portion of the chain corresponds to 47-70; sequence SSPAIPSLRRAAPPAPHLDEDAAS. Residues 71–91 traverse the membrane as a helical segment; the sequence is WFGAIVTLGAAAGGVLGGWLL. Residues 92-97 are Cytoplasmic-facing; that stretch reads DRAGRK. Residues 98–118 traverse the membrane as a helical segment; sequence LSLVLCALPFVAGFAVITAAQ. Topologically, residues 119–127 are extracellular; sequence NLWMLLGGR. Residues 128–148 traverse the membrane as a helical segment; that stretch reads LLTGLACGIASLVAPVYISEI. Over 149–158 the chain is Cytoplasmic; that stretch reads AYPEVRGLLG. A helical transmembrane segment spans residues 159-179; sequence SCVQLMVVTGILLAYLAGWVL. Gln162 is a D-glucose binding site. The Extracellular segment spans residues 180–182; that stretch reads EWR. The helical transmembrane segment at 183–203 threads the bilayer; the sequence is WLAVLGCVPPSFMLLLMCFMP. Topologically, residues 204–257 are cytoplasmic; that stretch reads ETPRFLLSQHKHQEAMAAMQFLWGYAQGWEEPPLGAQHQDFHVAQLRRPGVYKP. A helical transmembrane segment spans residues 258–278; the sequence is FIIGISLMAFQQLSGVNAVMF. D-glucose-binding positions include 268–269 and Asn274; that span reads QQ. Topologically, residues 279–293 are extracellular; sequence YAETIFEEAKFKDSS. The chain crosses the membrane as a helical span at residues 294–314; the sequence is LASVVVGVIQVLFTATAALIM. Residues 315-320 are Cytoplasmic-facing; that stretch reads DRAGRR. A helical transmembrane segment spans residues 321 to 341; sequence LLLTLSGVVMVFSTSAFGTYF. At 342–368 the chain is on the extracellular side; the sequence is KLTEGGPSNSSHVDLPALVSMEAADTN. Asn350 is a glycosylation site (N-linked (GlcNAc...) asparagine). A helical membrane pass occupies residues 369–389; it reads VGLAWLAVGSMCLFIAGFAVG. Residues 390-405 are Cytoplasmic-facing; sequence WGPIPWLLMSEIFPLH. A D-glucose-binding site is contributed by Trp395. A helical membrane pass occupies residues 406-426; that stretch reads VKGVATGVCVLTNWFMAFLVT. Residues 427-439 lie on the Extracellular side of the membrane; it reads KEFSSLMEVLRPY. The helical transmembrane segment at 440 to 460 threads the bilayer; sequence GAFWLASAFCIFGVLFTLACV. Topologically, residues 461 to 478 are cytoplasmic; it reads PETKGKTLEQITAHFEGR.

It belongs to the major facilitator superfamily. Sugar transporter (TC 2.A.1.1) family. Glucose transporter subfamily. As to quaternary structure, interacts with AP2B1. Abundantly expressed in testis and more moderately in lung, kidney, spleen, intestine, skeletal muscle, liver and mammary gland.

It localises to the cell membrane. The protein localises to the cytoplasmic vesicle membrane. It catalyses the reaction D-glucose(out) = D-glucose(in). The enzyme catalyses D-fructose(out) = D-fructose(in). The catalysed reaction is L-dehydroascorbate(out) = L-dehydroascorbate(in). It carries out the reaction alpha,alpha-trehalose(in) = alpha,alpha-trehalose(out). Inhibited by cytochalasin B. Its function is as follows. Insulin-regulated facilitative hexose transporter that mediates the transport of glucose and fructose. Facilitates hepatic influx of dietary trehalose, which in turn inhibits glucose and fructose influx triggering a starvation signal and hepatic autophagy through activation of AMPK and ULK1. Also able to mediate the transport of dehydroascorbate. This chain is Solute carrier family 2, facilitated glucose transporter member 8, found in Bos taurus (Bovine).